A 496-amino-acid polypeptide reads, in one-letter code: Probable cytosol aminopeptidase (496 aa).

Lys267 and Asp272 together coordinate Mn(2+). Lys279 is an active-site residue. Residues Asp290, Asp349, and Glu351 each coordinate Mn(2+). Residue Arg353 is part of the active site.

This sequence belongs to the peptidase M17 family. The cofactor is Mn(2+).

It localises to the cytoplasm. It catalyses the reaction Release of an N-terminal amino acid, Xaa-|-Yaa-, in which Xaa is preferably Leu, but may be other amino acids including Pro although not Arg or Lys, and Yaa may be Pro. Amino acid amides and methyl esters are also readily hydrolyzed, but rates on arylamides are exceedingly low.. The enzyme catalyses Release of an N-terminal amino acid, preferentially leucine, but not glutamic or aspartic acids.. Its function is as follows. Presumably involved in the processing and regular turnover of intracellular proteins. Catalyzes the removal of unsubstituted N-terminal amino acids from various peptides. The polypeptide is Probable cytosol aminopeptidase (Methylobacillus flagellatus (strain ATCC 51484 / DSM 6875 / VKM B-1610 / KT)).